The sequence spans 783 residues: BMP/retinoic acid-inducible neural-specific protein 2 (783 aa).

The signal sequence occupies residues 1 to 33 (MRWPCSSWFRGLWPEAAPWAVLLALGVPGWVLA). The 197-residue stretch at 85 to 281 (RYRIYREFAR…FVAAALSYIT (197 aa)) folds into the MACPF domain. 6 N-linked (GlcNAc...) asparagine glycosylation sites follow: Asn-185, Asn-354, Asn-473, Asn-579, Asn-626, and Asn-658.

Belongs to the BRINP family. Weakly expressed in embryonic stem (ES) cells. Strongly expressed in ES-derived neural stem cells (NSCs).

The protein resides in the secreted. Functionally, inhibits neuronal cell proliferation by negative regulation of the cell cycle transition. The polypeptide is BMP/retinoic acid-inducible neural-specific protein 2 (Brinp2) (Mus musculus (Mouse)).